Consider the following 664-residue polypeptide: DNA ligase (664 aa).

Residues 32 to 36 (DKEYD) and 80 to 81 (SL) contribute to the NAD(+) site. K122 serves as the catalytic N6-AMP-lysine intermediate. NAD(+) is bound by residues R144, E178, and K314. The Zn(2+) site is built by C407, C410, C423, and C429. The BRCT domain occupies 587–664 (IDENPFMDKT…NEEEFSNKIK (78 aa)).

The protein belongs to the NAD-dependent DNA ligase family. LigA subfamily. Mg(2+) is required as a cofactor. Requires Mn(2+) as cofactor.

It carries out the reaction NAD(+) + (deoxyribonucleotide)n-3'-hydroxyl + 5'-phospho-(deoxyribonucleotide)m = (deoxyribonucleotide)n+m + AMP + beta-nicotinamide D-nucleotide.. Its function is as follows. DNA ligase that catalyzes the formation of phosphodiester linkages between 5'-phosphoryl and 3'-hydroxyl groups in double-stranded DNA using NAD as a coenzyme and as the energy source for the reaction. It is essential for DNA replication and repair of damaged DNA. The chain is DNA ligase from Clostridium botulinum (strain Okra / Type B1).